The sequence spans 104 residues: Large ribosomal subunit protein bL21 (104 aa).

It belongs to the bacterial ribosomal protein bL21 family. In terms of assembly, part of the 50S ribosomal subunit. Contacts protein L20.

This protein binds to 23S rRNA in the presence of protein L20. This chain is Large ribosomal subunit protein bL21, found in Acidiphilium cryptum (strain JF-5).